A 561-amino-acid polypeptide reads, in one-letter code: Malate synthase, glyoxysomal (561 aa).

R177 serves as the catalytic Proton acceptor. Catalysis depends on D462, which acts as the Proton donor. The Microbody targeting signal signature appears at 559–561 (SRL).

It belongs to the malate synthase family.

The protein resides in the glyoxysome. It carries out the reaction glyoxylate + acetyl-CoA + H2O = (S)-malate + CoA + H(+). The protein operates within carbohydrate metabolism; glyoxylate cycle; (S)-malate from isocitrate: step 2/2. This chain is Malate synthase, glyoxysomal, found in Brassica napus (Rape).